Reading from the N-terminus, the 103-residue chain is GP16 protein (103 aa).

The protein is GP16 protein (GP16) of Orgyia pseudotsugata multicapsid polyhedrosis virus (OpMNPV).